The following is a 174-amino-acid chain: UPF0200 protein PAE1629 (174 aa).

9-16 (GLPGSGKT) serves as a coordination point for ATP.

Belongs to the UPF0200 family.

This chain is UPF0200 protein PAE1629, found in Pyrobaculum aerophilum (strain ATCC 51768 / DSM 7523 / JCM 9630 / CIP 104966 / NBRC 100827 / IM2).